The following is a 140-amino-acid chain: Low calcium response locus protein T (140 aa).

The polypeptide is Low calcium response locus protein T (lcrT) (Yersinia pestis).